The primary structure comprises 647 residues: Chaperone protein DnaK (647 aa).

At Thr199 the chain carries Phosphothreonine; by autocatalysis. Residues 602–647 (MYAQEQAQAGQQAGPGAGSASAGQSGEKPVEGEVVDAEFEEVKDKK) are disordered. Positions 604 to 627 (AQEQAQAGQQAGPGAGSASAGQSG) are enriched in low complexity.

Belongs to the heat shock protein 70 family.

In terms of biological role, acts as a chaperone. This Nitrosomonas eutropha (strain DSM 101675 / C91 / Nm57) protein is Chaperone protein DnaK.